Here is a 333-residue protein sequence, read N- to C-terminus: Anthranilate phosphoribosyltransferase (333 aa).

Residues Gly-78, 81-82 (GD), Thr-86, 88-91 (NVST), 106-114 (KHGNYSVSS), and Ser-118 each bind 5-phospho-alpha-D-ribose 1-diphosphate. An anthranilate-binding site is contributed by Gly-78. Ser-90 provides a ligand contact to Mg(2+). Asn-109 is a binding site for anthranilate. Arg-164 is an anthranilate binding site. Mg(2+)-binding residues include Asp-222 and Glu-223.

It belongs to the anthranilate phosphoribosyltransferase family. In terms of assembly, homodimer. The cofactor is Mg(2+).

The catalysed reaction is N-(5-phospho-beta-D-ribosyl)anthranilate + diphosphate = 5-phospho-alpha-D-ribose 1-diphosphate + anthranilate. Its pathway is amino-acid biosynthesis; L-tryptophan biosynthesis; L-tryptophan from chorismate: step 2/5. Catalyzes the transfer of the phosphoribosyl group of 5-phosphorylribose-1-pyrophosphate (PRPP) to anthranilate to yield N-(5'-phosphoribosyl)-anthranilate (PRA). The sequence is that of Anthranilate phosphoribosyltransferase from Natronomonas pharaonis (strain ATCC 35678 / DSM 2160 / CIP 103997 / JCM 8858 / NBRC 14720 / NCIMB 2260 / Gabara) (Halobacterium pharaonis).